Reading from the N-terminus, the 441-residue chain is Putative serine/threonine-protein kinase F31E3.2 (441 aa).

Positions 1–16 (MGNVATRKRPGCHHHI) are enriched in basic residues. The disordered stretch occupies residues 1–41 (MGNVATRKRPGCHHHIGRNEENLDDDEDGPAKKRLRIGEPQ). Positions 126-381 (FVLERQLGRG…FTVLHAHPFF (256 aa)) constitute a Protein kinase domain. ATP is bound by residues 132 to 140 (LGRGSFGVV) and Lys156. Asp253 functions as the Proton acceptor in the catalytic mechanism.

It belongs to the protein kinase superfamily. Ser/Thr protein kinase family.

It carries out the reaction L-seryl-[protein] + ATP = O-phospho-L-seryl-[protein] + ADP + H(+). The enzyme catalyses L-threonyl-[protein] + ATP = O-phospho-L-threonyl-[protein] + ADP + H(+). The protein is Putative serine/threonine-protein kinase F31E3.2 of Caenorhabditis elegans.